We begin with the raw amino-acid sequence, 326 residues long: GTP cyclohydrolase MptA (326 aa).

Belongs to the GTP cyclohydrolase IV family. Homodimer. Requires Fe(2+) as cofactor.

The catalysed reaction is GTP + H2O = 7,8-dihydroneopterin 2',3'-cyclic phosphate + formate + diphosphate + H(+). It participates in cofactor biosynthesis; 5,6,7,8-tetrahydromethanopterin biosynthesis. Converts GTP to 7,8-dihydro-D-neopterin 2',3'-cyclic phosphate, the first intermediate in the biosynthesis of coenzyme methanopterin. The protein is GTP cyclohydrolase MptA of Methanoregula boonei (strain DSM 21154 / JCM 14090 / 6A8).